The primary structure comprises 280 residues: Bifunctional protein FolD (280 aa).

NADP(+) contacts are provided by residues G166–S168 and S191.

Belongs to the tetrahydrofolate dehydrogenase/cyclohydrolase family. In terms of assembly, homodimer.

It carries out the reaction (6R)-5,10-methylene-5,6,7,8-tetrahydrofolate + NADP(+) = (6R)-5,10-methenyltetrahydrofolate + NADPH. The enzyme catalyses (6R)-5,10-methenyltetrahydrofolate + H2O = (6R)-10-formyltetrahydrofolate + H(+). The protein operates within one-carbon metabolism; tetrahydrofolate interconversion. Catalyzes the oxidation of 5,10-methylenetetrahydrofolate to 5,10-methenyltetrahydrofolate and then the hydrolysis of 5,10-methenyltetrahydrofolate to 10-formyltetrahydrofolate. This is Bifunctional protein FolD from Marinomonas sp. (strain MWYL1).